We begin with the raw amino-acid sequence, 490 residues long: MRINPTTSGSEVSAVEKKNLGRIVKIIGPVLDVAFPPGKMPNIYNALVVQGRDNEQTNVTCEVQQLLGNNRVRAVAMSDTDGLMRGMEVIDTGAPISVPVGGSTLGRIFNVLGQPVDNLGPVNTNTTSPIHKSAPAFIQLDTKLSIFETGIKVVDLLPPYRRGGKIGLFGGXGVGKTLLIMELINNIAKAHGGLSVFGGVGERTREGNDLYLEMKESGVINEENIPESKVALVYGQMNEPPGARMRVGLTALTMAEYFRDVNEQDVLLFIDNIFRFVQAGSEVSALLGRMPSAVGYQPTLSTEMGSLQERITSTKEGSITSIQAVYVPADDLTDPAPATTFAHLDATTVLSRGLAAKGIYPAVDPLDSTSTMLQPRIVGEEHYETAQRVKQTLQRYKELQDIIAILGLDELSEEDRLTVARARKIERFLSQPFFVAEVFTGSPGKYVGLAETIRGFQLILSGELDGLPEQAFYLVGNIDEATAKAMNLKT.

170–177 provides a ligand contact to ATP; sequence GGXGVGKT.

The protein belongs to the ATPase alpha/beta chains family. As to quaternary structure, F-type ATPases have 2 components, CF(1) - the catalytic core - and CF(0) - the membrane proton channel. CF(1) has five subunits: alpha(3), beta(3), gamma(1), delta(1), epsilon(1). CF(0) has four main subunits: a(1), b(1), b'(1) and c(9-12).

Its subcellular location is the plastid. It is found in the chloroplast thylakoid membrane. It catalyses the reaction ATP + H2O + 4 H(+)(in) = ADP + phosphate + 5 H(+)(out). Produces ATP from ADP in the presence of a proton gradient across the membrane. The catalytic sites are hosted primarily by the beta subunits. This is ATP synthase subunit beta, chloroplastic from Ipomoea coccinea (Scarlet morning-glory).